The sequence spans 122 residues: Large ribosomal subunit protein uL14 (122 aa).

This sequence belongs to the universal ribosomal protein uL14 family. In terms of assembly, part of the 50S ribosomal subunit. Forms a cluster with proteins L3 and L19. In the 70S ribosome, L14 and L19 interact and together make contacts with the 16S rRNA in bridges B5 and B8.

Binds to 23S rRNA. Forms part of two intersubunit bridges in the 70S ribosome. This chain is Large ribosomal subunit protein uL14, found in Desulforudis audaxviator (strain MP104C).